The sequence spans 80 residues: Three-finger toxin MALT0059C (80 aa).

Residues 1–21 form the signal peptide; the sequence is MRTLLLTLVVVTIVCLDLGNS. 4 cysteine pairs are disulfide-bonded: Cys24/Cys41, Cys35/Cys60, Cys64/Cys72, and Cys73/Cys78.

The protein belongs to the three-finger toxin family. Short-chain subfamily. As to expression, expressed by the venom gland.

The protein localises to the secreted. In terms of biological role, neurotoxin. Blocks muscular nicotinic acetylcholine receptors (nAChR). This is Three-finger toxin MALT0059C from Micrurus altirostris (Uruguayan coral snake).